A 481-amino-acid polypeptide reads, in one-letter code: Guanine nucleotide exchange factor C9orf72 homolog (481 aa).

Residues 23–194 (SPLLAATFAY…ELLASMRSHS (172 aa)) enclose the uDENN C9ORF72-type domain. One can recognise a cDENN C9ORF72-type domain in the interval 200-343 (DIADTVLNDD…SELTAFWRAT (144 aa)). One can recognise a dDENN C9ORF72-type domain in the interval 370–464 (VLHRDTLVKA…IKPGLHSFIF (95 aa)). The required for the homodimerization of the C9orf72-SMCR8 complex stretch occupies residues 461–481 (SFIFGRPFYTSVQERDVLMTF).

As to quaternary structure, component of the C9orf72-SMCR8 complex, at least composed of C9orf72, SMCR8 and WDR41. The complex is formed of two protomers, each individually consisting of one molecule each of C9orf72, SMCR8 and WDR41. The protomers homodimerize via an interaction between C9orf72 (via C-terminus) and SMCR8 (via N-terminus). Within each protomer SMCR8 (via DENN domain) acts as a bridging protein between WDR41 (via C-terminus and N-terminus) and C9orf72 (via C-terminus). The C9orf72-SMCR8 complex associates with the ULK1/ATG1 kinase complex. Interacts with ULK1/ATG1 kinase complex members ULK1, ATG13 and RB1CC1. Interacts with SMCR8; the interaction is direct. Interacts with HNRNPA1, HNRNPA2B1 and UBQLN2. Interacts with small Rab GTPase RAB1A; the interaction mediates recruitment of RAB1A to the ULK1/ATG1 kinase complex. Also interacts with small Rab GTPase RAB7A. Interacts with cofilin. Interacts with GTP-binding proteins ARF1 and ARF6. Interacts with the DLG4/PSD-95. Interacts with CARM1 (via PH domain-like fold). Interacts with RAB39A and RAB39B (in GDP-bound forms); functions as GEF for RAB39A and RAB39B.

It is found in the nucleus. It localises to the cytoplasm. The protein resides in the P-body. The protein localises to the stress granule. Its subcellular location is the endosome. It is found in the lysosome. It localises to the cytoplasmic vesicle. The protein resides in the autophagosome. The protein localises to the autolysosome. Its subcellular location is the secreted. It is found in the cell projection. It localises to the axon. The protein resides in the growth cone. The protein localises to the perikaryon. In terms of biological role, acts as a guanine-nucleotide releasing factor (GEF) for Rab GTPases by promoting the conversion of inactive RAB-GDP to the active form RAB-GTP. Acts as a GEF for RAB39A which enables HOPS-mediated autophagosome-lysosome membrane tethering and fusion in mammalian autophagy. Component of the C9orf72-SMCR8 complex where both subunits display GEF activity and that regulates autophagy. As part of the C9orf72-SMCR8-WDR41 (CSW) complex, functions as GEF for RAB8A and RAB39B, thereby promoting autophagosome maturation. As part of the C9orf72-SMCR8 complex, also functions as GTPase activating protein (GAP) for RAB8A and RAB11A in vitro. The C9orf72-SMCR8 complex also acts as a regulator of autophagy initiation by interacting with the ULK1/ATG1 kinase complex and modulating its protein kinase activity. Promotes initiation of autophagy by regulating the RAB1A-dependent trafficking of the ULK1/ATG1 kinase complex to the phagophore which leads to autophagosome formation. Acts as a regulator of mTORC1 signaling by promoting phosphorylation of mTORC1 substrates. Plays a role in endosomal trafficking. May be involved in regulating the maturation of phagosomes to lysosomes. Promotes the lysosomal localization and lysosome-mediated degradation of CARM1 which leads to inhibition of starvation-induced lipid metabolism. Regulates actin dynamics in motor neurons by inhibiting the GTP-binding activity of ARF6, leading to ARF6 inactivation. This reduces the activity of the LIMK1 and LIMK2 kinases which are responsible for phosphorylation and inactivation of cofilin, leading to CFL1/cofilin activation. Positively regulates axon extension and axon growth cone size in spinal motor neurons. Required for SMCR8 protein expression and localization at pre- and post-synaptic compartments in the forebrain, also regulates protein abundance of RAB3A and GRIA1/GLUR1 in post-synaptic compartments in the forebrain and hippocampus. Plays a role within the hematopoietic system in restricting inflammation and the development of autoimmunity. In Rattus norvegicus (Rat), this protein is Guanine nucleotide exchange factor C9orf72 homolog.